Reading from the N-terminus, the 357-residue chain is Protein RecA (357 aa).

73–80 (GPESSGKT) is an ATP binding site.

This sequence belongs to the RecA family.

It localises to the cytoplasm. In terms of biological role, can catalyze the hydrolysis of ATP in the presence of single-stranded DNA, the ATP-dependent uptake of single-stranded DNA by duplex DNA, and the ATP-dependent hybridization of homologous single-stranded DNAs. It interacts with LexA causing its activation and leading to its autocatalytic cleavage. This is Protein RecA from Nitratidesulfovibrio vulgaris (strain DSM 19637 / Miyazaki F) (Desulfovibrio vulgaris).